Here is a 197-residue protein sequence, read N- to C-terminus: Nucleoside triphosphate pyrophosphatase (197 aa).

Asp-75 functions as the Proton acceptor in the catalytic mechanism.

It belongs to the Maf family. A divalent metal cation serves as cofactor.

It localises to the cytoplasm. It catalyses the reaction a ribonucleoside 5'-triphosphate + H2O = a ribonucleoside 5'-phosphate + diphosphate + H(+). The enzyme catalyses a 2'-deoxyribonucleoside 5'-triphosphate + H2O = a 2'-deoxyribonucleoside 5'-phosphate + diphosphate + H(+). Its function is as follows. Nucleoside triphosphate pyrophosphatase. May have a dual role in cell division arrest and in preventing the incorporation of modified nucleotides into cellular nucleic acids. This Haemophilus ducreyi (strain 35000HP / ATCC 700724) protein is Nucleoside triphosphate pyrophosphatase.